A 552-amino-acid polypeptide reads, in one-letter code: Cleavage and polyadenylation specificity factor subunit 6 (552 aa).

The interval 1-213 (MADGVDHIDI…RGRFPGAVPG (213 aa)) is necessary for interaction with NXF1. The RRM domain occupies 81-161 (IALYIGNLTR…QNPVVTPCNK (81 aa)). A necessary for interaction with NUDT21/CPSF5 region spans residues 81-161 (IALYIGNLTR…QNPVVTPCNK (81 aa)). Residues 81 to 161 (IALYIGNLTR…QNPVVTPCNK (81 aa)) are necessary for nuclear paraspeckles localization. Position 157 is a phosphothreonine (Thr-157). Over residues 169-180 (MQSRKTTQSGQM) the composition is skewed to polar residues. Disordered regions lie at residues 169–411 (MQSR…PLSE) and 479–552 (GIES…YRHR). The GAR motif lies at 202-206 (RGRGR). Over residues 207-219 (FPGAVPGGDRFPG) the composition is skewed to low complexity. Pro residues-rich tracts occupy residues 220–265 (PTGP…PLAG), 285–366 (GQPP…PPPT), and 377–388 (GPPPTDPYGRPP). Basic and acidic residues predominate over residues 389 to 404 (PYDRGDYGPPGREMDT). Thr-404 and Thr-407 each carry phosphothreonine. The interval 404–552 (TARTPLSEAE…RDREREYRHR (149 aa)) is sufficient for nuclear speckle localization. The tract at residues 405–552 (ARTPLSEAEF…RDREREYRHR (148 aa)) is necessary for RNA-binding. Residues 481–552 (ESKSYGSGSR…RDREREYRHR (72 aa)) form a necessary for interaction with SRSF3, SRSF7 and TRA2B/SFRS10 region. Positions 491–552 (RRERSRERDH…RDREREYRHR (62 aa)) are arg/Ser-rich domain. Residues 494–504 (RSRERDHSRSR) show a composition bias toward basic and acidic residues. Phosphoserine is present on residues Ser-495, Ser-501, Ser-512, Ser-514, and Ser-526. Residues 505-515 (EKSRRHKSRSR) are compositionally biased toward basic residues. Residues 511-552 (KSRSRDRHDDYYRERSRERERHRDRDRDRDRERDREREYRHR) form a sufficient for nuclear targeting region. Residues 516-552 (DRHDDYYRERSRERERHRDRDRDRDRERDREREYRHR) are compositionally biased toward basic and acidic residues.

The protein belongs to the RRM CPSF6/7 family. As to quaternary structure, component of the cleavage factor Im (CFIm) complex which is a heterotetramer composed of two subunits of NUDT21/CPSF5 and two subunits of CPSF6 or CPSF7 or a heterodimer of CPSF6 and CPSF7. The cleavage factor Im (CFIm) complex associates with the CPSF and CSTF complexes to promote the assembly of the core mRNA 3'-processing machinery. Associates with the exon junction complex (EJC). Associates with the 80S ribosome particle. Interacts (via the RRM domain) with NUDT21/CPSF5; this interaction is direct and enhances binding to RNA. Interacts (via Arg/Ser-rich domain) with FIP1L1 (preferentially via unphosphorylated form and Arg/Glu/Asp-rich domain); this interaction mediates, at least in part, the interaction between the CFIm and CPSF complexes and may be inhibited by CPSF6 hyper-phosphorylation. Interacts (via N-terminus) with NXF1; this interaction is direct. Interacts with SRSF3. Interacts with SRSF7. Interacts with SNRNP70. Interacts with TRA2B/SFRS10. Interacts with UPF1. Interacts with UPF3B. Interacts with VIRMA. Interacts (via Arg/Ser-rich domain) with TNPO3; promoting nuclear import of CPSF6 independently of its phosphorylation status. Interacts with YTHDC1. Post-translationally, phosphorylated. Phosphorylated in the Arg/Ser-rich domain by SRPK1, in vitro. Symmetrically dimethylated on arginine residues in the GAR motif by PRMT5 in a WDR77- and CLNS1A-dependent manner. Asymmetrically dimethylated on arginine residues in the GAR motif by PRMT1.

The protein resides in the nucleus. It is found in the nucleoplasm. It localises to the nucleus speckle. The protein localises to the cytoplasm. Functionally, component of the cleavage factor Im (CFIm) complex that functions as an activator of the pre-mRNA 3'-end cleavage and polyadenylation processing required for the maturation of pre-mRNA into functional mRNAs. CFIm contributes to the recruitment of multiprotein complexes on specific sequences on the pre-mRNA 3'-end, so called cleavage and polyadenylation signals (pA signals). Most pre-mRNAs contain multiple pA signals, resulting in alternative cleavage and polyadenylation (APA) producing mRNAs with variable 3'-end formation. The CFIm complex acts as a key regulator of cleavage and polyadenylation site choice during APA through its binding to 5'-UGUA-3' elements localized in the 3'-untranslated region (UTR) for a huge number of pre-mRNAs. CPSF6 enhances NUDT21/CPSF5 binding to 5'-UGUA-3' elements localized upstream of pA signals and promotes RNA looping, and hence activates directly the mRNA 3'-processing machinery. Plays a role in mRNA export. The sequence is that of Cleavage and polyadenylation specificity factor subunit 6 from Pongo abelii (Sumatran orangutan).